The chain runs to 188 residues: UPF0301 protein XCV3063 (188 aa).

Belongs to the UPF0301 (AlgH) family.

This Xanthomonas euvesicatoria pv. vesicatoria (strain 85-10) (Xanthomonas campestris pv. vesicatoria) protein is UPF0301 protein XCV3063.